The chain runs to 86 residues: Defensin-like protein 259 (86 aa).

An N-terminal signal peptide occupies residues Met-1–Ala-25. Disulfide bonds link Cys-60/Cys-76, Cys-66/Cys-83, and Cys-70/Cys-85.

The protein belongs to the DEFL family.

Its subcellular location is the secreted. The chain is Defensin-like protein 259 from Arabidopsis thaliana (Mouse-ear cress).